The chain runs to 149 residues: Low molecular weight protein-tyrosine-phosphatase Wzb (149 aa).

C9 acts as the Nucleophile in catalysis. Residue R15 is part of the active site. The active-site Proton donor is the D115.

Belongs to the low molecular weight phosphotyrosine protein phosphatase family.

The catalysed reaction is O-phospho-L-tyrosyl-[protein] + H2O = L-tyrosyl-[protein] + phosphate. It participates in glycan metabolism; exopolysaccharide biosynthesis. In terms of biological role, dephosphorylates Wzc. Required for the extracellular polysaccharide colanic acid synthesis. Probably involved in the export of colanic acid from the cell to medium. Involved in protection of cells against contact-dependent growth inhibition (CDI). In Salmonella typhimurium (strain LT2 / SGSC1412 / ATCC 700720), this protein is Low molecular weight protein-tyrosine-phosphatase Wzb (wzb).